A 640-amino-acid polypeptide reads, in one-letter code: Probable inactive receptor kinase At3g08680 (640 aa).

Residues 1 to 22 (MMKIIAAFLFLLVTTFVSRCLS) form the signal peptide. LRR repeat units lie at residues 93–115 (ALRIISLRSNHLQGNIPSVILSL), 117–138 (FIRSLYFHENNFSGTIPPVLSH), 139–162 (RLVNLDLSANSLSGNIPTSLQNLT), 163–185 (QLTDLSLQNNSLSGPIPNLPPRL), and 186–206 (KYLNLSFNNLNGSVPSSVKSF). The segment at 222–249 (LTPCPENTTAPSPSPTTPTEGPGTTNIG) is disordered. Positions 226–247 (PENTTAPSPSPTTPTEGPGTTN) are enriched in low complexity. Residues 260–280 (GAIVGIAVGGSVLLFIILAII) form a helical membrane-spanning segment. The tract at residues 289 to 315 (DGGQDSTAVPKAKPGRSDNKAEEFGSG) is disordered. The Protein kinase domain occupies 341-614 (RASAEVLGKG…EEVVNMMEEI (274 aa)). At S343 the chain carries Phosphoserine. 347–355 (LGKGSYGTT) lines the ATP pocket. Residue T364 is modified to Phosphothreonine. K369 contacts ATP. Residues T441, T514, and T564 each carry the phosphothreonine modification. The tract at residues 612 to 640 (EEIRPSGSGPGSGNRASSPEMIRSSDSPV) is disordered.

The protein belongs to the protein kinase superfamily. Tyr protein kinase family.

It is found in the membrane. This Arabidopsis thaliana (Mouse-ear cress) protein is Probable inactive receptor kinase At3g08680.